The sequence spans 546 residues: Cytochrome P450 monooxygenase fumoB (546 aa).

The helical transmembrane segment at Leu-13–Trp-33 threads the bilayer. Asn-147 is a glycosylation site (N-linked (GlcNAc...) asparagine). Residue Cys-488 coordinates heme.

Belongs to the cytochrome P450 family. It depends on heme as a cofactor.

The protein resides in the membrane. Its pathway is secondary metabolite biosynthesis. Cytochrome P450 monooxygenase; part of the gene cluster that mediates the biosynthesis of fumosorinone, a 2-pyridone alkaloid that acts as an inhibitor of protein tyrosine phosphatase 1B which is implicated asa negative regulator of insulin receptor signaling and a potential drug target for the treatment of type II diabetes and other associated metabolic syndromes. The polyketide-amino acid backbone of fumosorinone is first assembled by the PKS-NRPS hybrid fumoS. The PKS modules condense one acetyl-CoA starter unit with 7 malonyl-CoA units, programmed C-methylations occurring after the first 3 and the sixth extensions, and cycles of full reduction occurring after the first 2 extensions. Because fumoS lacks a designated enoyl reductase (ER) domain, the required activity is provided the enoyl reductase fumoC. Upon formation of the polyketide backbone on the thiotemplate, the polyketide is transferred to the NRPS module and linked to tyrosine to produce the acyltetramic acid intermediate called prefumosorinone A. The cytochrome P450 monooxygenase fumoA then probably catalyzes an unprecedented oxidative ring expansion of prefumosorinone A to form prefumosorinone B which contains the 2-pyridone core of fumosorinone. The cytochrome P450 monooxygenase fumoB might hydroxylate the nitrogen of prefumosorinone B, but not the acyltetramic acid prefumosorinone A, to form fumosorinone. In Cordyceps fumosorosea (strain ARSEF 2679) (Isaria fumosorosea), this protein is Cytochrome P450 monooxygenase fumoB.